The primary structure comprises 157 residues: 17.8 kDa class I heat shock protein (157 aa).

Positions 43-157 (ETAAFVNTHI…PEVKAIDISG (115 aa)) constitute a sHSP domain.

The protein belongs to the small heat shock protein (HSP20) family. As to quaternary structure, forms oligomeric structures.

The protein localises to the cytoplasm. This chain is 17.8 kDa class I heat shock protein, found in Daucus carota (Wild carrot).